A 291-amino-acid chain; its full sequence is Neugrin (291 aa).

The first 15 residues, 1-15, serve as a signal peptide directing secretion; the sequence is MAVTLSLLLGGRVCA. 2 disordered regions span residues 26–48 and 155–270; these read GVAGPGPIGREPDPDSDWEPEER and GSGN…DNFS. Serine 41 is modified (phosphoserine). N-linked (GlcNAc...) asparagine glycans are attached at residues asparagine 158 and asparagine 186. Polar residues predominate over residues 236 to 246; sequence KYSSDSESPRG. N-linked (GlcNAc...) asparagine glycosylation is present at asparagine 268.

This sequence belongs to the neugrin family. In terms of assembly, forms a regulatory protein-RNA complex, consisting of RCC1L, NGRN, RPUSD3, RPUSD4, TRUB2, FASTKD2 and 16S mt-rRNA. Interacts with 16S mt-rRNA; this interaction is direct. In terms of tissue distribution, expressed at high levels in heart, brain and skeletal muscle. In brain, mainly expressed in neurons rather than glial cells.

It localises to the nucleus. It is found in the secreted. Its subcellular location is the mitochondrion membrane. In terms of biological role, plays an essential role in mitochondrial ribosome biogenesis. As a component of a functional protein-RNA module, consisting of RCC1L, NGRN, RPUSD3, RPUSD4, TRUB2, FASTKD2 and 16S mitochondrial ribosomal RNA (16S mt-rRNA), controls 16S mt-rRNA abundance and is required for intra-mitochondrial translation of core subunits of the oxidative phosphorylation system. This chain is Neugrin, found in Homo sapiens (Human).